Reading from the N-terminus, the 250-residue chain is Functional amyloid sbunit FapE (250 aa).

The N-terminal stretch at 1–27 (MLREHAMYTHHCFVLACCLGAALPAPA) is a signal peptide.

Belongs to the FapE family. A minor component of purified amyloid fibrils. Fibrils are resistant to boiling in 2% (weight/vol) SDS and require &gt;90% (vol/vol) formic acid to dissolve.

It localises to the fimbrium. The protein localises to the secreted. In terms of biological role, a minor component of the functional amyloid in this bacterium. Upon overexpression of the endogenous six-gene locus (fapA-fapF), cells form large clumps during liquid growth, make large amounts of biofilm and produce amyloid fibrils. The protein is Functional amyloid sbunit FapE of Pseudomonas aeruginosa (strain ATCC 15692 / DSM 22644 / CIP 104116 / JCM 14847 / LMG 12228 / 1C / PRS 101 / PAO1).